A 625-amino-acid polypeptide reads, in one-letter code: 1-deoxy-D-xylulose-5-phosphate synthase (625 aa).

Residues H74 and 115–117 (GHS) each bind thiamine diphosphate. A Mg(2+)-binding site is contributed by D146. Residues 147-148 (GA), N175, Y286, and E367 each bind thiamine diphosphate. Residue N175 participates in Mg(2+) binding.

The protein belongs to the transketolase family. DXPS subfamily. As to quaternary structure, homodimer. Mg(2+) serves as cofactor. Requires thiamine diphosphate as cofactor.

It catalyses the reaction D-glyceraldehyde 3-phosphate + pyruvate + H(+) = 1-deoxy-D-xylulose 5-phosphate + CO2. Its pathway is metabolic intermediate biosynthesis; 1-deoxy-D-xylulose 5-phosphate biosynthesis; 1-deoxy-D-xylulose 5-phosphate from D-glyceraldehyde 3-phosphate and pyruvate: step 1/1. Catalyzes the acyloin condensation reaction between C atoms 2 and 3 of pyruvate and glyceraldehyde 3-phosphate to yield 1-deoxy-D-xylulose-5-phosphate (DXP). The chain is 1-deoxy-D-xylulose-5-phosphate synthase from Lachnoclostridium phytofermentans (strain ATCC 700394 / DSM 18823 / ISDg) (Clostridium phytofermentans).